A 335-amino-acid chain; its full sequence is Cell division protein ZipA (335 aa).

Over M1–L6 the chain is Periplasmic. The chain crosses the membrane as a helical span at residues V7–I27. Residues R28–M335 are Cytoplasmic-facing. Disordered stretches follow at residues E37–V128 and R163–E185. Positions A170 to E185 are enriched in low complexity.

This sequence belongs to the ZipA family. Interacts with FtsZ via their C-terminal domains.

Its subcellular location is the cell inner membrane. Essential cell division protein that stabilizes the FtsZ protofilaments by cross-linking them and that serves as a cytoplasmic membrane anchor for the Z ring. Also required for the recruitment to the septal ring of downstream cell division proteins. This Shewanella loihica (strain ATCC BAA-1088 / PV-4) protein is Cell division protein ZipA.